Consider the following 357-residue polypeptide: Spermatogenesis- and oogenesis-specific basic helix-loop-helix-containing protein 1 (357 aa).

The span at Met1–Arg14 shows a compositional bias: basic and acidic residues. A disordered region spans residues Met1–Ser40. Residues Thr19–Asp31 show a composition bias toward polar residues. One can recognise a bHLH domain in the interval Pro54–Ala105. The disordered stretch occupies residues Lys145 to Gly210. Over residues Ser200 to Pro209 the composition is skewed to low complexity.

In terms of assembly, forms both hetero- and homodimers with SOHLH2. In males, it is mainly expressed in testis, while in females it is mainly expressed in ovary. In testis, it is exclusively expressed in spermatogonia, with a preference for prespermatogonia and type A spermatogonia. In ovary, it is detected in germ cell cysts, primordial follicles, and primary follicles but is undetectable by the secondary follicle stage (at protein level). Expressed in the majority of spermatogonia in adult animals, but not in the most undifferentiated spermatogonial population.

It is found in the cytoplasm. It localises to the nucleus. Functionally, transcription regulator of both male and female germline differentiation. Suppresses genes involved in spermatogonial stem cells maintenance, and induces genes important for spermatogonial differentiation. Coordinates oocyte differentiation without affecting meiosis I. The chain is Spermatogenesis- and oogenesis-specific basic helix-loop-helix-containing protein 1 (Sohlh1) from Mus musculus (Mouse).